The primary structure comprises 730 residues: Elongation factor 2 (730 aa).

Positions 19–260 constitute a tr-type G domain; sequence DRIRNIGIVA…MVVKHLPNPL (242 aa). Residues 28-35, 94-98, and 148-151 each bind GTP; these read AHIDHGKT, DTPGH, and NKVD. H597 is subject to Diphthamide.

It belongs to the TRAFAC class translation factor GTPase superfamily. Classic translation factor GTPase family. EF-G/EF-2 subfamily.

The protein localises to the cytoplasm. Catalyzes the GTP-dependent ribosomal translocation step during translation elongation. During this step, the ribosome changes from the pre-translocational (PRE) to the post-translocational (POST) state as the newly formed A-site-bound peptidyl-tRNA and P-site-bound deacylated tRNA move to the P and E sites, respectively. Catalyzes the coordinated movement of the two tRNA molecules, the mRNA and conformational changes in the ribosome. This Methanoculleus marisnigri (strain ATCC 35101 / DSM 1498 / JR1) protein is Elongation factor 2.